A 229-amino-acid chain; its full sequence is Potassium/proton antiporter CemA (229 aa).

The next 3 membrane-spanning stretches (helical) occupy residues 7-27, 114-134, and 190-210; these read FTPL…SLSF, IISF…LVIL, and ISGL…YWIF.

It belongs to the CemA family.

The protein resides in the plastid. It is found in the chloroplast inner membrane. The enzyme catalyses K(+)(in) + H(+)(out) = K(+)(out) + H(+)(in). Functionally, contributes to K(+)/H(+) antiport activity by supporting proton efflux to control proton extrusion and homeostasis in chloroplasts in a light-dependent manner to modulate photosynthesis. Prevents excessive induction of non-photochemical quenching (NPQ) under continuous-light conditions. Indirectly promotes efficient inorganic carbon uptake into chloroplasts. This is Potassium/proton antiporter CemA from Jasminum nudiflorum (Winter jasmine).